The sequence spans 91 residues: MGCIKSKQECNLHKTIRLKRNKENDEMHNKEKVCLVQANQEDSKFCSCTASPLLLEYAHRLSEDIVNKAVRQWAEVDSKYSDIPYIESDAV.

G2 carries the N-myristoyl glycine lipid modification.

It belongs to the small membrane AKAP family. Post-translationally, may be palmitoylated at Cys-3.

It localises to the cell membrane. Functionally, binds to type I regulatory subunits of protein kinase A and may anchor/target them to the plasma membrane. The protein is Small membrane A-kinase anchor protein of Xenopus tropicalis (Western clawed frog).